The chain runs to 607 residues: Elongation factor 4 (607 aa).

Positions 11–193 constitute a tr-type G domain; it reads SKIRNFSIIA…QIVEKVPAPT (183 aa). Residues 23–28 and 140–143 contribute to the GTP site; these read DHGKST and NKID.

This sequence belongs to the TRAFAC class translation factor GTPase superfamily. Classic translation factor GTPase family. LepA subfamily.

Its subcellular location is the cell membrane. The catalysed reaction is GTP + H2O = GDP + phosphate + H(+). Functionally, required for accurate and efficient protein synthesis under certain stress conditions. May act as a fidelity factor of the translation reaction, by catalyzing a one-codon backward translocation of tRNAs on improperly translocated ribosomes. Back-translocation proceeds from a post-translocation (POST) complex to a pre-translocation (PRE) complex, thus giving elongation factor G a second chance to translocate the tRNAs correctly. Binds to ribosomes in a GTP-dependent manner. The chain is Elongation factor 4 from Bacillus cereus (strain AH820).